The following is a 166-amino-acid chain: MSNIEKQAGELQEKLIAVNRVSKTVKGGRIMSFTALTVVGDGNGRVGFGYGKAREVPAAIQKAMEKARRNMINVALNEGTLQHPVKGSHTGSRVFMQPASEGTGIIAGGAMRAVLEVAGVHNVLSKAYGSTNPINVVRATIDALANMKSPEMVAAKRGKTVEEIWG.

Positions 11–74 (LQEKLIAVNR…EKARRNMINV (64 aa)) constitute an S5 DRBM domain.

This sequence belongs to the universal ribosomal protein uS5 family. As to quaternary structure, part of the 30S ribosomal subunit. Contacts proteins S4 and S8.

Functionally, with S4 and S12 plays an important role in translational accuracy. Located at the back of the 30S subunit body where it stabilizes the conformation of the head with respect to the body. The sequence is that of Small ribosomal subunit protein uS5 from Haemophilus ducreyi (strain 35000HP / ATCC 700724).